Consider the following 570-residue polypeptide: Proline--tRNA ligase (570 aa).

This sequence belongs to the class-II aminoacyl-tRNA synthetase family. ProS type 1 subfamily. In terms of assembly, homodimer.

Its subcellular location is the cytoplasm. It catalyses the reaction tRNA(Pro) + L-proline + ATP = L-prolyl-tRNA(Pro) + AMP + diphosphate. Its function is as follows. Catalyzes the attachment of proline to tRNA(Pro) in a two-step reaction: proline is first activated by ATP to form Pro-AMP and then transferred to the acceptor end of tRNA(Pro). As ProRS can inadvertently accommodate and process non-cognate amino acids such as alanine and cysteine, to avoid such errors it has two additional distinct editing activities against alanine. One activity is designated as 'pretransfer' editing and involves the tRNA(Pro)-independent hydrolysis of activated Ala-AMP. The other activity is designated 'posttransfer' editing and involves deacylation of mischarged Ala-tRNA(Pro). The misacylated Cys-tRNA(Pro) is not edited by ProRS. In Aquifex aeolicus (strain VF5), this protein is Proline--tRNA ligase (proS).